A 500-amino-acid polypeptide reads, in one-letter code: L-arabinose isomerase (500 aa).

Mn(2+)-binding residues include glutamate 306, glutamate 333, histidine 350, and histidine 450.

This sequence belongs to the arabinose isomerase family. As to quaternary structure, homohexamer. Mn(2+) serves as cofactor.

The catalysed reaction is beta-L-arabinopyranose = L-ribulose. Its pathway is carbohydrate degradation; L-arabinose degradation via L-ribulose; D-xylulose 5-phosphate from L-arabinose (bacterial route): step 1/3. In terms of biological role, catalyzes the conversion of L-arabinose to L-ribulose. The protein is L-arabinose isomerase of Escherichia coli O157:H7.